An 877-amino-acid polypeptide reads, in one-letter code: Phosphoenolpyruvate carboxylase (877 aa).

Catalysis depends on residues His138 and Lys543.

This sequence belongs to the PEPCase type 1 family. It depends on Mg(2+) as a cofactor.

It catalyses the reaction oxaloacetate + phosphate = phosphoenolpyruvate + hydrogencarbonate. Forms oxaloacetate, a four-carbon dicarboxylic acid source for the tricarboxylic acid cycle. The sequence is that of Phosphoenolpyruvate carboxylase from Aeromonas salmonicida (strain A449).